Reading from the N-terminus, the 225-residue chain is Prolactin (225 aa).

The signal sequence occupies residues 1-28 (MTIQGSDRKGTLLLLVMSNLLFCQNVHP). A disulfide bridge connects residues C32 and C37. Residues S52 and S116 each carry the phosphoserine modification. 2 disulfide bridges follow: C84–C200 and C217–C225.

Belongs to the somatotropin/prolactin family. Interacts with PRLR.

It localises to the secreted. In terms of biological role, prolactin acts primarily on the mammary gland by promoting lactation. This chain is Prolactin (PRL), found in Alexandromys montebelli (Japanese grass vole).